A 90-amino-acid chain; its full sequence is U7-theraphotoxin-Hhn1a 5 (90 aa).

The first 19 residues, 1 to 19, serve as a signal peptide directing secretion; it reads MKTAIFTVVLALAVFAVLS. Residues 20-50 constitute a propeptide that is removed on maturation; it reads FGWEANEKALSEESTELIHEKEAASETEARE. Cystine bridges form between cysteine 51/cysteine 65, cysteine 58/cysteine 70, and cysteine 64/cysteine 81.

This sequence belongs to the neurotoxin 10 (Hwtx-1) family. 13 (Hntx-13) subfamily. As to expression, expressed by the venom gland.

It localises to the secreted. Functionally, ion channel inhibitor. In Cyriopagopus hainanus (Chinese bird spider), this protein is U7-theraphotoxin-Hhn1a 5.